We begin with the raw amino-acid sequence, 356 residues long: Phospho-N-acetylmuramoyl-pentapeptide-transferase (356 aa).

9 helical membrane passes run 27-47 (AAAITALLIGLIFGPRFIGWM), 74-94 (MGGLMILIAVSISLFLWMDFA), 97-117 (YVWACIAVMLGFGVIGFIDDY), 128-148 (VSGKVRLLWEFGIAFFACYLI), 164-184 (PVIDLGWFYYPFAAFVIVGTA), 201-221 (VIIASLAFFVISYVVGNAVFA), 241-261 (AIIGAGFAFLWFNAPPAAIFM), 284-304 (IVLGIVGGLFVAEALSVIIQV), and 333-353 (TVVIRFWIISFALALLGLATL).

This sequence belongs to the glycosyltransferase 4 family. MraY subfamily. Requires Mg(2+) as cofactor.

The protein localises to the cell inner membrane. It catalyses the reaction UDP-N-acetyl-alpha-D-muramoyl-L-alanyl-gamma-D-glutamyl-meso-2,6-diaminopimeloyl-D-alanyl-D-alanine + di-trans,octa-cis-undecaprenyl phosphate = di-trans,octa-cis-undecaprenyl diphospho-N-acetyl-alpha-D-muramoyl-L-alanyl-D-glutamyl-meso-2,6-diaminopimeloyl-D-alanyl-D-alanine + UMP. It participates in cell wall biogenesis; peptidoglycan biosynthesis. Functionally, catalyzes the initial step of the lipid cycle reactions in the biosynthesis of the cell wall peptidoglycan: transfers peptidoglycan precursor phospho-MurNAc-pentapeptide from UDP-MurNAc-pentapeptide onto the lipid carrier undecaprenyl phosphate, yielding undecaprenyl-pyrophosphoryl-MurNAc-pentapeptide, known as lipid I. This chain is Phospho-N-acetylmuramoyl-pentapeptide-transferase, found in Zymomonas mobilis subsp. mobilis (strain ATCC 31821 / ZM4 / CP4).